The following is a 99-amino-acid chain: Large ribosomal subunit protein bL25 (99 aa).

It belongs to the bacterial ribosomal protein bL25 family. Part of the 50S ribosomal subunit; part of the 5S rRNA/L5/L18/L25 subcomplex. Contacts the 5S rRNA. Binds to the 5S rRNA independently of L5 and L18.

Functionally, this is one of the proteins that binds to the 5S RNA in the ribosome where it forms part of the central protuberance. This Nostoc sp. (strain PCC 7120 / SAG 25.82 / UTEX 2576) protein is Large ribosomal subunit protein bL25.